We begin with the raw amino-acid sequence, 252 residues long: Imidazole glycerol phosphate synthase subunit HisF (252 aa).

Active-site residues include Asp-11 and Asp-130.

Belongs to the HisA/HisF family. Heterodimer of HisH and HisF.

It localises to the cytoplasm. The catalysed reaction is 5-[(5-phospho-1-deoxy-D-ribulos-1-ylimino)methylamino]-1-(5-phospho-beta-D-ribosyl)imidazole-4-carboxamide + L-glutamine = D-erythro-1-(imidazol-4-yl)glycerol 3-phosphate + 5-amino-1-(5-phospho-beta-D-ribosyl)imidazole-4-carboxamide + L-glutamate + H(+). It participates in amino-acid biosynthesis; L-histidine biosynthesis; L-histidine from 5-phospho-alpha-D-ribose 1-diphosphate: step 5/9. IGPS catalyzes the conversion of PRFAR and glutamine to IGP, AICAR and glutamate. The HisF subunit catalyzes the cyclization activity that produces IGP and AICAR from PRFAR using the ammonia provided by the HisH subunit. The chain is Imidazole glycerol phosphate synthase subunit HisF from Geobacillus thermodenitrificans (strain NG80-2).